The sequence spans 61 residues: Photosystem II reaction center protein Z (61 aa).

2 helical membrane passes run 8-28 and 41-61; these read ALLVLVLYSLLLVVAVPVLFS and LVGSLLWVLMVIGVGVLSFFK.

This sequence belongs to the PsbZ family. As to quaternary structure, PSII is composed of 1 copy each of membrane proteins PsbA, PsbB, PsbC, PsbD, PsbE, PsbF, PsbH, PsbI, PsbJ, PsbK, PsbL, PsbM, PsbT, PsbX, PsbY, PsbZ, Psb30/Ycf12, peripheral proteins PsbO, CyanoQ (PsbQ), PsbU, PsbV and a large number of cofactors. It forms dimeric complexes.

It localises to the cellular thylakoid membrane. Functionally, may control the interaction of photosystem II (PSII) cores with the light-harvesting antenna, regulates electron flow through the 2 photosystem reaction centers. PSII is a light-driven water plastoquinone oxidoreductase, using light energy to abstract electrons from H(2)O, generating a proton gradient subsequently used for ATP formation. The chain is Photosystem II reaction center protein Z from Synechococcus sp. (strain JA-3-3Ab) (Cyanobacteria bacterium Yellowstone A-Prime).